The primary structure comprises 94 residues: uncharacterized protein (94 aa).

This is an uncharacterized protein from Escherichia coli (strain K12).